The sequence spans 167 residues: 6,7-dimethyl-8-ribityllumazine synthase (167 aa).

5-amino-6-(D-ribitylamino)uracil contacts are provided by residues Phe-23, Thr-57–Glu-59, and Ala-81–Ile-83. Gly-86 to Thr-87 is a binding site for (2S)-2-hydroxy-3-oxobutyl phosphate. His-89 (proton donor) is an active-site residue. Phe-119 contacts 5-amino-6-(D-ribitylamino)uracil. Arg-133 provides a ligand contact to (2S)-2-hydroxy-3-oxobutyl phosphate.

It belongs to the DMRL synthase family.

It carries out the reaction (2S)-2-hydroxy-3-oxobutyl phosphate + 5-amino-6-(D-ribitylamino)uracil = 6,7-dimethyl-8-(1-D-ribityl)lumazine + phosphate + 2 H2O + H(+). The protein operates within cofactor biosynthesis; riboflavin biosynthesis; riboflavin from 2-hydroxy-3-oxobutyl phosphate and 5-amino-6-(D-ribitylamino)uracil: step 1/2. Its function is as follows. Catalyzes the formation of 6,7-dimethyl-8-ribityllumazine by condensation of 5-amino-6-(D-ribitylamino)uracil with 3,4-dihydroxy-2-butanone 4-phosphate. This is the penultimate step in the biosynthesis of riboflavin. The sequence is that of 6,7-dimethyl-8-ribityllumazine synthase from Myxococcus xanthus (strain DK1622).